A 129-amino-acid polypeptide reads, in one-letter code: Small ribosomal subunit protein eS6 (129 aa).

The segment at 53–88 is disordered; sequence TGGSDTSGRPMRPDVRGVTTKEIMSDGGVGFEPTTD.

The protein belongs to the eukaryotic ribosomal protein eS6 family.

The polypeptide is Small ribosomal subunit protein eS6 (rps6e) (Haloarcula marismortui (strain ATCC 43049 / DSM 3752 / JCM 8966 / VKM B-1809) (Halobacterium marismortui)).